The chain runs to 257 residues: Coenzyme F420:L-glutamate ligase (257 aa).

GTP contacts are provided by residues 9-12, 38-39, and Lys-43; these read VPEV and ST. Asp-113 contacts a divalent metal cation. Residue Asn-116 coordinates GTP. The a divalent metal cation site is built by Asp-154, Thr-155, and Glu-212. 210–217 serves as a coordination point for GTP; the sequence is TGEGDGGT.

It belongs to the CofE family. Homodimer. The cofactor is Mg(2+). Mn(2+) is required as a cofactor. It depends on K(+) as a cofactor.

It catalyses the reaction oxidized coenzyme F420-0 + GTP + L-glutamate = oxidized coenzyme F420-1 + GDP + phosphate + H(+). The enzyme catalyses oxidized coenzyme F420-1 + GTP + L-glutamate = oxidized coenzyme F420-2 + GDP + phosphate + H(+). It participates in cofactor biosynthesis; coenzyme F420 biosynthesis. In terms of biological role, catalyzes the GTP-dependent successive addition of two or more gamma-linked L-glutamates to the L-lactyl phosphodiester of 7,8-didemethyl-8-hydroxy-5-deazariboflavin (F420-0) to form coenzyme F420-0-glutamyl-glutamate (F420-2) or polyglutamated F420 derivatives. The chain is Coenzyme F420:L-glutamate ligase from Haloarcula marismortui (strain ATCC 43049 / DSM 3752 / JCM 8966 / VKM B-1809) (Halobacterium marismortui).